The following is a 367-amino-acid chain: Tetraacyldisaccharide 4'-kinase (367 aa).

Residue 68 to 75 (VLGGSGKT) participates in ATP binding.

Belongs to the LpxK family.

The enzyme catalyses a lipid A disaccharide + ATP = a lipid IVA + ADP + H(+). It participates in glycolipid biosynthesis; lipid IV(A) biosynthesis; lipid IV(A) from (3R)-3-hydroxytetradecanoyl-[acyl-carrier-protein] and UDP-N-acetyl-alpha-D-glucosamine: step 6/6. In terms of biological role, transfers the gamma-phosphate of ATP to the 4'-position of a tetraacyldisaccharide 1-phosphate intermediate (termed DS-1-P) to form tetraacyldisaccharide 1,4'-bis-phosphate (lipid IVA). The protein is Tetraacyldisaccharide 4'-kinase of Chlamydia abortus (strain DSM 27085 / S26/3) (Chlamydophila abortus).